We begin with the raw amino-acid sequence, 38 residues long: ECIGHRRSCKEDRNGCCKLYTCNCWYPTPDDQWCKCLL.

Cystine bridges form between Cys-2–Cys-17, Cys-9–Cys-22, Cys-16–Cys-36, and Cys-24–Cys-34.

In terms of tissue distribution, expressed by the venom gland.

It localises to the secreted. This Phoneutria keyserlingi (Brazilian wandering spider) protein is U9-ctenitoxin-Pk1a.